The sequence spans 327 residues: Fumigatonoid B endoperoxide isomerase nvfE (327 aa).

The tract at residues 1–22 (MGRDQVSHKRSQNSNVSEIPDL) is disordered. Positions 152, 154, and 234 each coordinate Fe cation.

It belongs to the PhyH family. In terms of assembly, homodimer. Fe cation serves as cofactor.

It catalyses the reaction fumigatonoid B = fumigatonoid C. Its pathway is secondary metabolite biosynthesis; terpenoid biosynthesis. In terms of biological role, fumigatonoid B endoperoxide isomerase; part of the gene cluster that mediates the biosynthesis of novofumigatonin, a heavily oxygenated meroterpenoid containing a unique orthoester moiety. The first step of the pathway is the synthesis of 3,5-dimethylorsellinic acid (DMOA) by the polyketide synthase nvfA via condensation of one acetyl-CoA starter unit with 3 malonyl-CoA units and 2 methylations. DMOA is then converted to farnesyl-DMOA by the farnesyltransferase nvfB. Epoxydation by FAD-dependent monooxygenase nvfK, followed by a protonation-initiated cyclization catalyzed by the terpene cyclase nvfL leads to the production of asnavolin H. The short chain dehydrogenase nvfC then as a 3-OH dehydrogenase of asnovolin H to yield chemesin D. There are two branches to synthesize asnovolin A from chemesin D. In one branch, chemesin D undergoes Baeyer-Villiger oxidation by nvfH, methylation by nvfJ, and enoyl reduction by the nvfM D enoylreductase that reduces the double bond between C-5'and C-6', to form respectively asnovolin I, asnovolin K, and asnovolin A. In the other branch, the methylation precedes the Baeyer-Villiger oxidation and the enoyl reduction to yield asnovolin A via the asnovolin J intermediate. Asnovolin A is further converted to fumigatonoid A by the Fe(II)/2-oxoglutarate-dependent dioxygenase nvfI that catalyzes an endoperoxidation reaction. The alpha/beta hydrolase nvfD then acts as an epimerase that converts fumigatonoid A to its C-5' epimer, which then undergoes spontaneous or nvfD-catalyzed lactonization. The following step utilizes the ketoreductase nvfG to produce fumigatonoid B. The dioxygenase nvfE further converts fumigatonoid B into fumigatonoid C. Finally the Fe(II)/2-oxoglutarate-dependent dioxygenase nvfF catalyzes two rounds of oxidation to transform fumigatonoid C into the end product, novofumigatonin A. The polypeptide is Fumigatonoid B endoperoxide isomerase nvfE (Aspergillus novofumigatus (strain IBT 16806)).